Consider the following 613-residue polypeptide: MTDKITFNDLGLPEFILKAVSDLGFETPSPIQQSCIPHLLNGNDVLGMAQTGSGKTAAFALPLLAQIDPSEKHPQMLVMAPTRELAIQVADACELFVKYAQGTRIVTLYGGQRYDIQLRALKQGAQVVVGTPGRILDHIRRGTLNLSELRFIVLDEADEMLRMGFIDDVETVMAELPENHQTALFSATMPEPIRRITKRFMNDPQEVKIKVNNENAPDIDQSCWYVHGVRKNEALLRFLEVEDFDAAIIFARTKTGTLDITELLEKNGFRSAALNGDMTQQLREQTLDRLRNGSLDIVVATDVAARGIDIERISLVVNYDIPLDAESYVHRIGRTGRAGRSGRALLFVEPRERRLLRNIEHLMKKGINEVELPNHLVLQECRRKKFVAKITKQLEHHDLEQYRSLLEDLFTADQDQENIAAAMLMLLQGKQKLILPPDPPMEKRRRERNDRGDRRENPRSAERRGERKGYGNPQPMDLYRIEVGRADGVEVRHIVGAIANEGDINSRYIGHIKLYDDYTTVELPQGMPKELLQQFAKTRVLNKQMQMSFLGAVKSDNSRGSDDFNGKRKGRGGDFRGERGRERGNDNRGNRKFNEKSNRTFSDKPRRDRRSSF.

The short motif at 5 to 33 is the Q motif element; it reads ITFNDLGLPEFILKAVSDLGFETPSPIQQ. The Helicase ATP-binding domain maps to 36 to 207; sequence IPHLLNGNDV…KRFMNDPQEV (172 aa). 49–56 contacts ATP; sequence AQTGSGKT. The DEAD box signature appears at 155 to 158; that stretch reads DEAD. Positions 231–378 constitute a Helicase C-terminal domain; it reads KNEALLRFLE…EVELPNHLVL (148 aa). Disordered stretches follow at residues 434 to 476 and 552 to 613; these read ILPP…PQPM and AVKS…RSSF. Basic and acidic residues-rich tracts occupy residues 440 to 469 and 556 to 613; these read PMEK…ERKG and DNSR…RSSF.

It belongs to the DEAD box helicase family. DeaD/CsdA subfamily.

Its subcellular location is the cytoplasm. It catalyses the reaction ATP + H2O = ADP + phosphate + H(+). DEAD-box RNA helicase involved in various cellular processes at low temperature, including ribosome biogenesis, mRNA degradation and translation initiation. The sequence is that of ATP-dependent RNA helicase DeaD from Haemophilus influenzae (strain ATCC 51907 / DSM 11121 / KW20 / Rd).